We begin with the raw amino-acid sequence, 338 residues long: uncharacterized protein (338 aa).

This is an uncharacterized protein from Acanthamoeba polyphaga (Amoeba).